The sequence spans 156 residues: Small ribosomal subunit protein uS7 (156 aa).

This sequence belongs to the universal ribosomal protein uS7 family. In terms of assembly, part of the 30S ribosomal subunit. Contacts proteins S9 and S11.

Functionally, one of the primary rRNA binding proteins, it binds directly to 16S rRNA where it nucleates assembly of the head domain of the 30S subunit. Is located at the subunit interface close to the decoding center, probably blocks exit of the E-site tRNA. The sequence is that of Small ribosomal subunit protein uS7 from Thiobacillus denitrificans (strain ATCC 25259 / T1).